The primary structure comprises 170 residues: Viral interleukin-10 homolog (170 aa).

The N-terminal stretch at 1–23 (MERRLVVTLQCLVLLYLAPECGG) is a signal peptide. Disulfide bonds link cysteine 27-cysteine 119 and cysteine 73-cysteine 125. A coiled-coil region spans residues 97-145 (EAKDHVNSLGENLKTLRLRLRRCHRFLPCENKSKAVEQIKNAFNKLQEK). N-linked (GlcNAc...) asparagine; by host glycosylation is present at asparagine 127.

The protein belongs to the IL-10 family. In terms of assembly, homodimer.

It is found in the secreted. In terms of biological role, inhibits IFN-gamma synthesis. Down-regulates the expression of the host TAP1 gene (transporter associated with antigen processing), thereby affecting the transport of peptides into the endoplasmic reticulum and subsequent peptide loading by MHC class I molecules. In consequence, infected cells are masked for immune recognition by cytotoxic T-lymphocytes. The sequence is that of Viral interleukin-10 homolog from Epstein-Barr virus (strain AG876) (HHV-4).